The sequence spans 302 residues: uncharacterized protein (302 aa).

Transmembrane regions (helical) follow at residues 1–21 (MSWIIFYTIIFALLVLDLGVI), 33–53 (SLLFSLFYFTISCLFGIYIYY), 67–87 (FLIEKAMSLDNIFVISIIFQF), 101–121 (FGIIGVIAFRAVMIYGGIILI), 124–144 (FSWLLYIFAVILIATGVKTFY), 185–205 (YVTPLFISLILIEAIDLVFAI), 220–240 (IIYTSNIFAILGLRALFFCLA), 253–273 (LALILIFIGIKIFIHHYIAIP), and 274–294 (AYISLTVTITLLLLGIFASVI).

This sequence belongs to the TerC family.

The protein localises to the cell membrane. This is an uncharacterized protein from Rickettsia bellii (strain RML369-C).